Reading from the N-terminus, the 405-residue chain is Aspartokinase (405 aa).

ACT domains lie at 267–344 (VSME…AKVS) and 345–405 (IVGV…QLDQ).

This sequence belongs to the aspartokinase family.

The enzyme catalyses L-aspartate + ATP = 4-phospho-L-aspartate + ADP. Its pathway is amino-acid biosynthesis; L-lysine biosynthesis via DAP pathway; (S)-tetrahydrodipicolinate from L-aspartate: step 1/4. The protein operates within amino-acid biosynthesis; L-methionine biosynthesis via de novo pathway; L-homoserine from L-aspartate: step 1/3. It functions in the pathway amino-acid biosynthesis; L-threonine biosynthesis; L-threonine from L-aspartate: step 1/5. In Helicobacter pylori (strain J99 / ATCC 700824) (Campylobacter pylori J99), this protein is Aspartokinase (lysC).